A 323-amino-acid chain; its full sequence is tRNA N6-adenosine threonylcarbamoyltransferase (323 aa).

3 residues coordinate Fe cation: histidine 106, histidine 110, and tyrosine 127. Substrate contacts are provided by residues 127–131 (YVSGA), aspartate 159, glycine 172, glutamate 176, and asparagine 255. Aspartate 283 provides a ligand contact to Fe cation.

It belongs to the KAE1 / TsaD family. As to quaternary structure, monomer. Component of the KEOPS complex that consists of Kae1, Bud32, Cgi121 and Pcc1; the whole complex dimerizes. Fe(2+) serves as cofactor.

Its subcellular location is the cytoplasm. It carries out the reaction L-threonylcarbamoyladenylate + adenosine(37) in tRNA = N(6)-L-threonylcarbamoyladenosine(37) in tRNA + AMP + H(+). Functionally, required for the formation of a threonylcarbamoyl group on adenosine at position 37 (t(6)A37) in tRNAs that read codons beginning with adenine. Is a component of the KEOPS complex that is probably involved in the transfer of the threonylcarbamoyl moiety of threonylcarbamoyl-AMP (TC-AMP) to the N6 group of A37. Kae1 likely plays a direct catalytic role in this reaction, but requires other protein(s) of the complex to fulfill this activity. The chain is tRNA N6-adenosine threonylcarbamoyltransferase from Methanocella arvoryzae (strain DSM 22066 / NBRC 105507 / MRE50).